Reading from the N-terminus, the 150-residue chain is FAD synthase (150 aa).

ATP is bound by residues T11–F12, H16–H19, D96, and Y124.

It belongs to the archaeal FAD synthase family. In terms of assembly, homodimer. The cofactor is a divalent metal cation.

The enzyme catalyses FMN + ATP + H(+) = FAD + diphosphate. It functions in the pathway cofactor biosynthesis; FAD biosynthesis; FAD from FMN: step 1/1. Its function is as follows. Catalyzes the transfer of the AMP portion of ATP to flavin mononucleotide (FMN) to produce flavin adenine dinucleotide (FAD) coenzyme. This Methanococcus maripaludis (strain DSM 14266 / JCM 13030 / NBRC 101832 / S2 / LL) protein is FAD synthase.